Reading from the N-terminus, the 426-residue chain is COMPASS component SWD1 (426 aa).

WD repeat units follow at residues 24 to 63 (ENPL…PICV), 70 to 109 (AHVR…KPLK), 212 to 251 (ITSS…ENSA), 264 to 307 (INKL…LVRV), and 310 to 350 (GAEE…KWSA). Residues Arg236 and Lys266 each contribute to the DNA site.

Component of the Set1C/COMPASS complex which consists of SET1(2), BRE2(2), SPP1(2), SDC1(1), SHG1(1), SWD1(1), SWD2(1), and SWD3(1).

Its subcellular location is the nucleus. The protein resides in the chromosome. It localises to the telomere. In terms of biological role, component of the Set1C/COMPASS complex that specifically mono-, di- and trimethylates histone H3 to form H3K4me1/2/3, which subsequently plays a role in telomere length maintenance and transcription elongation regulation. COMPASS recognizes ubiquitinated H2B on one face of the nucleosome which stimulates the methylation of H3 on the opposing face. SWD1/CPS50 acts as an assembly and regulatory hub for COMPASS complex formation. Serves as a highly utilized surface for COMPASS interaction with the nucleosome. The chain is COMPASS component SWD1 from Saccharomyces cerevisiae (strain ATCC 204508 / S288c) (Baker's yeast).